The following is a 267-amino-acid chain: Hydroxyethylthiazole kinase (267 aa).

M46 serves as a coordination point for substrate. Positions 122 and 168 each coordinate ATP. G195 serves as a coordination point for substrate.

This sequence belongs to the Thz kinase family. Requires Mg(2+) as cofactor.

It carries out the reaction 5-(2-hydroxyethyl)-4-methylthiazole + ATP = 4-methyl-5-(2-phosphooxyethyl)-thiazole + ADP + H(+). It participates in cofactor biosynthesis; thiamine diphosphate biosynthesis; 4-methyl-5-(2-phosphoethyl)-thiazole from 5-(2-hydroxyethyl)-4-methylthiazole: step 1/1. In terms of biological role, catalyzes the phosphorylation of the hydroxyl group of 4-methyl-5-beta-hydroxyethylthiazole (THZ). The chain is Hydroxyethylthiazole kinase from Moorella thermoacetica (strain ATCC 39073 / JCM 9320).